Here is a 130-residue protein sequence, read N- to C-terminus: Protein ApaG (130 aa).

The ApaG domain occupies 3–127 (SAVTRGIEVT…FSLDVPEQRR (125 aa)).

This Brucella canis (strain ATCC 23365 / NCTC 10854 / RM-666) protein is Protein ApaG.